A 262-amino-acid chain; its full sequence is Phosphate import ATP-binding protein PstB (262 aa).

The ABC transporter domain occupies 15–257; that stretch reads AKASNLNLWY…PQKSKTEQYI (243 aa). 47 to 54 contributes to the ATP binding site; the sequence is GPSGCGKS.

Belongs to the ABC transporter superfamily. Phosphate importer (TC 3.A.1.7) family. In terms of assembly, the complex is composed of two ATP-binding proteins (PstB), two transmembrane proteins (PstC and PstA) and a solute-binding protein (PstS).

Its subcellular location is the cell inner membrane. It carries out the reaction phosphate(out) + ATP + H2O = ADP + 2 phosphate(in) + H(+). Part of the ABC transporter complex PstSACB involved in phosphate import. Responsible for energy coupling to the transport system. The sequence is that of Phosphate import ATP-binding protein PstB from Wolinella succinogenes (strain ATCC 29543 / DSM 1740 / CCUG 13145 / JCM 31913 / LMG 7466 / NCTC 11488 / FDC 602W) (Vibrio succinogenes).